The chain runs to 360 residues: Tubulin-like protein CetZ2 (360 aa).

GTP-binding positions include 10–14 (QAGGK), 65–66 (GG), 106–108 (GSG), glutamate 138, asparagine 165, and asparagine 183. Residues 334-354 (EAIDKAETEPREDPKGMWHSD) are compositionally biased toward basic and acidic residues. Residues 334–360 (EAIDKAETEPREDPKGMWHSDDLDDLL) are disordered.

It belongs to the CetZ family.

The protein resides in the cytoplasm. Functionally, involved in cell shape control. The chain is Tubulin-like protein CetZ2 from Haloferax volcanii (strain ATCC 29605 / DSM 3757 / JCM 8879 / NBRC 14742 / NCIMB 2012 / VKM B-1768 / DS2) (Halobacterium volcanii).